We begin with the raw amino-acid sequence, 201 residues long: 3-isopropylmalate dehydratase small subunit (201 aa).

This sequence belongs to the LeuD family. LeuD type 1 subfamily. As to quaternary structure, heterodimer of LeuC and LeuD.

It carries out the reaction (2R,3S)-3-isopropylmalate = (2S)-2-isopropylmalate. Its pathway is amino-acid biosynthesis; L-leucine biosynthesis; L-leucine from 3-methyl-2-oxobutanoate: step 2/4. In terms of biological role, catalyzes the isomerization between 2-isopropylmalate and 3-isopropylmalate, via the formation of 2-isopropylmaleate. This chain is 3-isopropylmalate dehydratase small subunit, found in Thermus thermophilus (strain ATCC BAA-163 / DSM 7039 / HB27).